The sequence spans 334 residues: GTP 3',8-cyclase (334 aa).

In terms of domain architecture, Radical SAM core spans 13–239 (RFHRKFYYLR…KVKAANDGPA (227 aa)). Arg-22 provides a ligand contact to GTP. Positions 29 and 33 each coordinate [4Fe-4S] cluster. S-adenosyl-L-methionine is bound at residue Tyr-35. Cys-36 lines the [4Fe-4S] cluster pocket. Arg-73 provides a ligand contact to GTP. Gly-77 is an S-adenosyl-L-methionine binding site. Thr-104 lines the GTP pocket. Ser-128 contributes to the S-adenosyl-L-methionine binding site. Lys-165 provides a ligand contact to GTP. Met-199 is a binding site for S-adenosyl-L-methionine. The [4Fe-4S] cluster site is built by Cys-262 and Cys-265. Position 267-269 (267-269 (RLR)) interacts with GTP. Cys-279 contacts [4Fe-4S] cluster.

It belongs to the radical SAM superfamily. MoaA family. In terms of assembly, monomer and homodimer. [4Fe-4S] cluster serves as cofactor.

The catalysed reaction is GTP + AH2 + S-adenosyl-L-methionine = (8S)-3',8-cyclo-7,8-dihydroguanosine 5'-triphosphate + 5'-deoxyadenosine + L-methionine + A + H(+). The protein operates within cofactor biosynthesis; molybdopterin biosynthesis. Its function is as follows. Catalyzes the cyclization of GTP to (8S)-3',8-cyclo-7,8-dihydroguanosine 5'-triphosphate. In Vibrio vulnificus (strain CMCP6), this protein is GTP 3',8-cyclase.